Consider the following 302-residue polypeptide: Short-chain dehydrogenase/reductase 3 (302 aa).

4 helical membrane passes run 9 to 29 (LVVF…GLVL), 170 to 190 (IVCL…DYCT), 195 to 215 (AFAF…VSAT), and 253 to 273 (AVQL…LIIL). Ser-175 contributes to the substrate binding site. Residue Tyr-188 is the Proton acceptor of the active site.

The protein belongs to the short-chain dehydrogenases/reductases (SDR) family. In terms of tissue distribution, in the retina, expressed in cone but not rod outer segments.

Its subcellular location is the membrane. The enzyme catalyses all-trans-retinol + NADP(+) = all-trans-retinal + NADPH + H(+). Functionally, catalyzes the reduction of all-trans-retinal to all-trans-retinol in the presence of NADPH. This Bos taurus (Bovine) protein is Short-chain dehydrogenase/reductase 3 (DHRS3).